Reading from the N-terminus, the 342-residue chain is Renalase (342 aa).

The N-terminal stretch at 1–17 is a signal peptide; that stretch reads MAQVLIVGAGMTGSLCA. FAD-binding positions include Thr12, Arg42, and 61–62; that span reads QY.

Belongs to the renalase family. FAD is required as a cofactor. Secreted into the blood by the kidney. Highly expressed in the kidney, expressed at lower level in heart, skeletal muscle and small intestine. Its plasma concentration is markedly reduced in patients with end-stage renal disease, as compared with healthy subjects.

The protein localises to the secreted. It carries out the reaction 1,2-dihydro-beta-NAD + O2 + H(+) = H2O2 + NAD(+). The enzyme catalyses 1,2-dihydro-beta-NADP + O2 + H(+) = H2O2 + NADP(+). It catalyses the reaction 1,6-dihydro-beta-NADP + O2 + H(+) = H2O2 + NADP(+). The catalysed reaction is 1,6-dihydro-beta-NAD + O2 + H(+) = H2O2 + NAD(+). Catalyzes the oxidation of the less abundant 1,2-dihydro-beta-NAD(P) and 1,6-dihydro-beta-NAD(P) to form beta-NAD(P)(+). The enzyme hormone is secreted by the kidney, and circulates in blood and modulates cardiac function and systemic blood pressure. Lowers blood pressure in vivo by decreasing cardiac contractility and heart rate and preventing a compensatory increase in peripheral vascular tone, suggesting a causal link to the increased plasma catecholamine and heightened cardiovascular risk. High concentrations of catecholamines activate plasma renalase and promotes its secretion and synthesis. This Homo sapiens (Human) protein is Renalase (RNLS).